A 205-amino-acid chain; its full sequence is Thymidine kinase (205 aa).

ATP contacts are provided by residues 9–16 and 88–91; these read SAMNAGKT and DECH. Residue Glu89 is the Proton acceptor of the active site. Residues Cys146, Cys148, Cys183, and His186 each contribute to the Zn(2+) site.

The protein belongs to the thymidine kinase family. Homotetramer.

It localises to the cytoplasm. It catalyses the reaction thymidine + ATP = dTMP + ADP + H(+). The protein is Thymidine kinase of Blochmanniella pennsylvanica (strain BPEN).